Reading from the N-terminus, the 346-residue chain is Phosphoribosylformylglycinamidine cyclo-ligase (346 aa).

This sequence belongs to the AIR synthase family.

The protein resides in the cytoplasm. It catalyses the reaction 2-formamido-N(1)-(5-O-phospho-beta-D-ribosyl)acetamidine + ATP = 5-amino-1-(5-phospho-beta-D-ribosyl)imidazole + ADP + phosphate + H(+). Its pathway is purine metabolism; IMP biosynthesis via de novo pathway; 5-amino-1-(5-phospho-D-ribosyl)imidazole from N(2)-formyl-N(1)-(5-phospho-D-ribosyl)glycinamide: step 2/2. The sequence is that of Phosphoribosylformylglycinamidine cyclo-ligase from Proteus mirabilis (strain HI4320).